Here is a 307-residue protein sequence, read N- to C-terminus: uncharacterized protein (307 aa).

Residues 254–278 (HSRHHRRHHRRHHHHHHQNSSHSDE) are disordered. The span at 255–272 (SRHHRRHHRRHHHHHHQN) shows a compositional bias: basic residues.

This sequence to yeast YOR062c.

This is an uncharacterized protein from Saccharomyces cerevisiae (strain ATCC 204508 / S288c) (Baker's yeast).